The primary structure comprises 76 residues: Omega-agatoxin-Aa3a (76 aa).

Disulfide bonds link C2–C19, C9–C25, C16–C52, C18–C40, C27–C38, and C59–C67.

Belongs to the neurotoxin 04 (omega-agtx) family. 03 (type II/III omega-agtx) subfamily. In terms of tissue distribution, expressed by the venom gland.

It localises to the secreted. Its function is as follows. Omega-agatoxin are antagonist of voltage-gated calcium channels. They block insect neuromuscular transmission presynaptically. Potent blocker of N- (Cav2.2/CACNA1B) and L-type (Cav1/CACNA1) calcium channels. This chain is Omega-agatoxin-Aa3a, found in Agelenopsis aperta (North American funnel-web spider).